A 769-amino-acid polypeptide reads, in one-letter code: 5-methyltetrahydropteroyltriglutamate--homocysteine methyltransferase (769 aa).

5-methyltetrahydropteroyltri-L-glutamate-binding positions include 16 to 19 (RELK) and Lys-118. L-homocysteine-binding positions include 440–442 (IGS) and Glu-493. Residues 440–442 (IGS) and Glu-493 contribute to the L-methionine site. 5-methyltetrahydropteroyltri-L-glutamate-binding positions include 524-525 (RC) and Trp-570. An L-homocysteine-binding site is contributed by Asp-608. An L-methionine-binding site is contributed by Asp-608. Glu-614 contacts 5-methyltetrahydropteroyltri-L-glutamate. 3 residues coordinate Zn(2+): His-650, Cys-652, and Glu-674. His-706 serves as the catalytic Proton donor. Cys-738 serves as a coordination point for Zn(2+).

The protein belongs to the vitamin-B12 independent methionine synthase family. The cofactor is Zn(2+).

The catalysed reaction is 5-methyltetrahydropteroyltri-L-glutamate + L-homocysteine = tetrahydropteroyltri-L-glutamate + L-methionine. It functions in the pathway amino-acid biosynthesis; L-methionine biosynthesis via de novo pathway; L-methionine from L-homocysteine (MetE route): step 1/1. Catalyzes the transfer of a methyl group from 5-methyltetrahydrofolate to homocysteine resulting in methionine formation. The sequence is that of 5-methyltetrahydropteroyltriglutamate--homocysteine methyltransferase from Acidiphilium cryptum (strain JF-5).